A 1351-amino-acid chain; its full sequence is uncharacterized protein (1351 aa).

Residues 1 to 17 (MSKKDSKNSPKKSKDTN) show a composition bias toward basic and acidic residues. A disordered region spans residues 1 to 31 (MSKKDSKNSPKKSKDTNSDESSSSNAETSSD). A compositionally biased stretch (low complexity) spans 19–31 (DESSSSNAETSSD).

This is an uncharacterized protein from Acanthamoeba polyphaga mimivirus (APMV).